Here is a 327-residue protein sequence, read N- to C-terminus: GTPase Obg (327 aa).

The region spanning 1-159 (MQFIDQANII…WEVQLELKLL (159 aa)) is the Obg domain. One can recognise an OBG-type G domain in the interval 160–327 (AEVGIIGLPN…SLLSEVWKRI (168 aa)). Residues 166–173 (GLPNAGKS), 191–195 (FTTLI), 213–216 (DIPG), 280–283 (NKME), and 309–311 (SSS) contribute to the ATP site. Mg(2+) contacts are provided by serine 173 and threonine 193.

It belongs to the TRAFAC class OBG-HflX-like GTPase superfamily. OBG GTPase family. As to quaternary structure, monomer. Mg(2+) is required as a cofactor.

Its subcellular location is the cytoplasm. In terms of biological role, an essential GTPase which binds GTP, GDP and possibly (p)ppGpp with moderate affinity, with high nucleotide exchange rates and a fairly low GTP hydrolysis rate. Plays a role in control of the cell cycle, stress response, ribosome biogenesis and in those bacteria that undergo differentiation, in morphogenesis control. In Prochlorococcus marinus (strain MIT 9301), this protein is GTPase Obg.